A 519-amino-acid chain; its full sequence is F-box only protein 31-A (519 aa).

The interval 11-37 (GQSGGCRRRQQRKGAGNDPELEDEEEE) is disordered. In terms of domain architecture, F-box spans 54-100 (PHSLLLLPPEILVEIFSLLPGTELGGLAQVCSKFRQILTTDTIWKRR). Zn(2+) is bound by residues cysteine 196, histidine 204, cysteine 220, and histidine 226. Residues 369–390 (REQRQTDNEEDDGRGAGPDKAE) are compositionally biased toward basic and acidic residues. The segment at 369-424 (REQRQTDNEEDDGRGAGPDKAEPAQQPAPLLRPPNEDANGADDDGDGGEQKPPNVQ) is disordered.

This sequence belongs to the FBXO31 family. Part of a SCF (SKP1-cullin-F-box) protein ligase complex SCF(FBXO31).

The protein localises to the cytoplasm. It functions in the pathway protein modification; protein ubiquitination. Substrate-recognition component of the SCF(FBXO31) protein ligase complex, which specifically mediates the ubiquitination of proteins amidated at their C-terminus in response to oxidative stress, leading to their degradation by the proteasome. Fbxo31 specifically recognizes and binds C-terminal peptides bearing an amide: C-terminal amidation in response to oxidative stress takes place following protein fragmentation. The SCF(FBXO31) also plays a role in G1 arrest following DNA damage by mediating ubiquitination of phosphorylated cyclin-D1 (ccnd1), promoting its degradation by the proteasome, resulting in G1 arrest. The SCF(FBXO31) complex is however not a major regulator of ccnd1 stability during the G1/S transition. The sequence is that of F-box only protein 31-A (fbxo31-a) from Xenopus laevis (African clawed frog).